Here is an 830-residue protein sequence, read N- to C-terminus: Nucleolar complex-associated protein 3 (830 aa).

Disordered regions lie at residues 1-22 (MGKNRRKQKVIPPPLLPPDVAE), 67-86 (KYEEERSKRKTLQEEKGNGE), 112-169 (KSKL…EETP), 391-436 (GKPN…KIRD), and 802-830 (LQSEEKKPLKKQNNVVKKKLKNPKSKKQI). Coiled coils occupy residues 61–81 (VMTVEDKYEEERSKRKTLQEE) and 111–156 (KKSK…HEKD). Positions 67-84 (KYEEERSKRKTLQEEKGN) are enriched in basic and acidic residues. Residues 118-129 (AETDEAEKDVLE) show a composition bias toward acidic residues. Basic and acidic residues predominate over residues 130-140 (DEHVLNKSQRR). Positions 138 to 145 (QRREKAKK) match the Nuclear localization signal 1 motif. Residues 141 to 150 (EKAKKSKREA) show a composition bias toward basic residues. Residues 159-168 (DEILQEEEET) show a composition bias toward acidic residues. Residues 391–400 (GKPNKEDEHN) are compositionally biased toward basic and acidic residues. Residues 400–429 (NKKYKKNNKRKTQEEQNQVQENERKKSKKD) are a coiled coil. Residues 408-415 (KRKTQEEQ) carry the Nuclear localization signal 2 motif. The span at 420–436 (ENERKKSKKDMMSKIRD) shows a compositional bias: basic and acidic residues. The Nuclear localization signal 3 motif lies at 806 to 813 (EKKPLKKQ). Positions 817 to 830 (VKKKLKNPKSKKQI) are enriched in basic residues.

Belongs to the CBF/MAK21 family. In terms of assembly, component of nucleolar complexes. Interacts with RBL and NOC2 in both the nucleolus and nucleoplasm.

The protein resides in the nucleus. The protein localises to the nucleolus. It is found in the nucleoplasm. Functionally, may be required for synthesis of 60S ribosomal subunits and the transport of pre-ribosomes from the nucleoplasm to the cytoplasm. Also required for initiation of DNA replication. The protein is Nucleolar complex-associated protein 3 of Arabidopsis thaliana (Mouse-ear cress).